The following is a 661-amino-acid chain: PAN2-PAN3 deadenylation complex subunit PAN3 (661 aa).

2 disordered regions span residues methionine 1–asparagine 26 and aspartate 53–aspartate 130. A C3H1-type zinc finger spans residues asparagine 26–histidine 55. Low complexity predominate over residues serine 75–serine 102. The segment covering serine 115–aspartate 130 has biased composition (polar residues). The pseudokinase domain stretch occupies residues glutamine 263–serine 524. ATP contacts are provided by residues arginine 315, aspartate 364–threonine 371, and serine 424–lysine 425. Residues serine 525–phenylalanine 563 are a coiled coil. The tract at residues valine 564–histidine 661 is knob domain.

The protein belongs to the protein kinase superfamily. PAN3 family. Homodimer. Forms a heterotrimer with a catalytic subunit pan2 to form the poly(A)-nuclease (PAN) deadenylation complex. Interacts (via PAM-2 motif) with poly(A)-binding protein pab1 (via PABC domain), conferring substrate specificity of the enzyme complex.

It is found in the cytoplasm. Functionally, regulatory subunit of the poly(A)-nuclease (PAN) deadenylation complex, one of two cytoplasmic mRNA deadenylases involved in mRNA turnover. PAN specifically shortens poly(A) tails of RNA and the activity is stimulated by poly(A)-binding protein pab1. PAN deadenylation is followed by rapid degradation of the shortened mRNA tails by the CCR4-NOT complex. Deadenylated mRNAs are then degraded by two alternative mechanisms, namely exosome-mediated 3'-5' exonucleolytic degradation, or deadenylation-dependent mRNA decaping and subsequent 5'-3' exonucleolytic degradation by xrn1. May also be involved in post-transcriptional maturation of mRNA poly(A) tails. pan3 acts as a positive regulator for PAN activity, recruiting the catalytic subunit pan2 to mRNA via its interaction with RNA and with pab1. The sequence is that of PAN2-PAN3 deadenylation complex subunit PAN3 from Neosartorya fischeri (strain ATCC 1020 / DSM 3700 / CBS 544.65 / FGSC A1164 / JCM 1740 / NRRL 181 / WB 181) (Aspergillus fischerianus).